The following is a 340-amino-acid chain: Ketol-acid reductoisomerase (NADP(+)) (340 aa).

The region spanning 1–183 (MAITVYYDKD…GGGRTGIIET (183 aa)) is the KARI N-terminal Rossmann domain. NADP(+) contacts are provided by residues 26-29 (FGSQ), Arg49, Ser52, Ser54, and 84-87 (DEIQ). His109 is an active-site residue. An NADP(+)-binding site is contributed by Gly135. Positions 184–329 (TFKAETETDL…RNLRAMMPWI (146 aa)) constitute a KARI C-terminal knotted domain. Mg(2+) is bound by residues Asp192, Glu196, Glu228, and Glu232. Position 253 (Ser253) interacts with substrate.

It belongs to the ketol-acid reductoisomerase family. It depends on Mg(2+) as a cofactor.

It catalyses the reaction (2R)-2,3-dihydroxy-3-methylbutanoate + NADP(+) = (2S)-2-acetolactate + NADPH + H(+). The catalysed reaction is (2R,3R)-2,3-dihydroxy-3-methylpentanoate + NADP(+) = (S)-2-ethyl-2-hydroxy-3-oxobutanoate + NADPH + H(+). The protein operates within amino-acid biosynthesis; L-isoleucine biosynthesis; L-isoleucine from 2-oxobutanoate: step 2/4. Its pathway is amino-acid biosynthesis; L-valine biosynthesis; L-valine from pyruvate: step 2/4. Functionally, involved in the biosynthesis of branched-chain amino acids (BCAA). Catalyzes an alkyl-migration followed by a ketol-acid reduction of (S)-2-acetolactate (S2AL) to yield (R)-2,3-dihydroxy-isovalerate. In the isomerase reaction, S2AL is rearranged via a Mg-dependent methyl migration to produce 3-hydroxy-3-methyl-2-ketobutyrate (HMKB). In the reductase reaction, this 2-ketoacid undergoes a metal-dependent reduction by NADPH to yield (R)-2,3-dihydroxy-isovalerate. The sequence is that of Ketol-acid reductoisomerase (NADP(+)) from Campylobacter jejuni subsp. jejuni serotype O:23/36 (strain 81-176).